The following is a 760-amino-acid chain: Heat shock transcription factor (760 aa).

Disordered regions lie at residues 1–132 (MIMN…PPVV) and 206–276 (FHPL…GPKT). Polar residues-rich tracts occupy residues 19-31 (TESN…SSPS) and 38-88 (RSGT…SNKL). The segment covering 119-130 (DYKDSIDLDKPP) has biased composition (basic and acidic residues). Residues 221–247 (AGPANNSQQQQQQQQQDSSIPSDGISS) show a composition bias toward low complexity. Residues 276-385 (TRPAFVMKIW…EDLLDKIVRN (110 aa)) mediate DNA binding. Positions 414 to 467 (ELETIKMNQYVISEDLRRVRQDNKMLWQENYLNRERNQVQGRTLDKILKFLSVV) are involved in trimerization. Disordered regions lie at residues 492 to 545 (TQYR…NNNN), 560 to 582 (LTNR…EGSI), 609 to 630 (HQPG…SAPS), and 674 to 760 (QEQH…VSDH). Over residues 515 to 539 (NSRFARDNNQTAQPTYESPLSTSDT) the composition is skewed to polar residues. Ser-570 carries the phosphoserine modification. Thr-574 is subject to Phosphothreonine. Position 576 is a phosphoserine (Ser-576). At Thr-577 the chain carries Phosphothreonine. Residues 613–628 (ATTNNNNHSSSTAISA) show a composition bias toward low complexity. Residues 646–684 (RNLDDLEKHINKEGQSIQQVQDWIDKLAQEQHEKQQQQQ) are a coiled coil. 2 stretches are compositionally biased toward polar residues: residues 701-722 (ATTT…NISF) and 731-742 (PGSNVSSNINDS). Positions 744-760 (GNEKKSKKRSIEEVSDH) are enriched in basic and acidic residues.

Belongs to the HSF family. As to quaternary structure, homotrimer. Homotrimerization increases the affinity of HSF1 to DNA. Interacts with HSP90. Activated by phosphorylation of at least Ser-570, Thr-574, Ser-576 and Thr-577 in response to heat shock. Additional unidentified residues are also phosphorylated in response to heat shock.

The protein resides in the nucleus. Functionally, DNA-binding transcription factor that specifically binds heat shock promoter elements (HSE) and activates transcription. With HSP90, is required for the modulation of the chaperone levels in response to growth temperature, rather than the activation of acute responses to sudden thermal transitions. Activated during infection and contributes to full virulence. The chain is Heat shock transcription factor from Candida albicans (strain SC5314 / ATCC MYA-2876) (Yeast).